A 121-amino-acid chain; its full sequence is Natriuretic peptides B (121 aa).

Positions 1-26 (MDLLKVLSQMILFLLFLYLSPLGGHS) are cleaved as a signal peptide. Residues 61-89 (LKDQGLTKEHPKRVLRSQGSTLRVQQRPQ) form a disordered region. Over residues 77 to 89 (SQGSTLRVQQRPQ) the composition is skewed to polar residues. Cysteine 99 and cysteine 115 are joined by a disulfide.

Belongs to the natriuretic peptide family. In terms of processing, the precursor molecule is proteolytically cleaved by the endoprotease Furin to produce brain natriuretic peptide 45. May undergo further proteolytic cleavage by various proteases such as DPP4, MME and possibly FAP, to give rise to a variety of shorter peptides. May be cleaved at Ser-91 by the prolyl endopeptidase FAP (seprase) activity (in vitro). May be degraded by IDE. During IDE degradation, the resulting products initially increase the activation of NPR1 and can also stimulate NPR2 to produce cGMP before the fragments are completely degraded and inactivated by IDE (in vitro). Expressed abundantly in the ventricle, and in a lesser extent in the atrium (at protein level).

It localises to the secreted. Cardiac hormone that plays a key role in mediating cardio-renal homeostasis. May also function as a paracrine antifibrotic factor in the heart. Acts by specifically binding and stimulating NPR1 to produce cGMP, which in turn activates effector proteins that drive various biological responses. Likely involved in regulating the extracellular fluid volume and maintaining the fluid-electrolyte balance through natriuresis, diuresis, kaluresis and chloruresis. This is Natriuretic peptides B (Nppb) from Mus musculus (Mouse).